The primary structure comprises 179 residues: PP2C-like domain-containing protein R307 (179 aa).

The region spanning 1 to 176 is the PPM-type phosphatase domain; that stretch reads MNESKRENIQ…DNVSVIIIFF (176 aa).

The protein resides in the virion. The sequence is that of PP2C-like domain-containing protein R307 from Acanthamoeba polyphaga mimivirus (APMV).